Reading from the N-terminus, the 397-residue chain is Mesoderm posterior protein 2 (397 aa).

Disordered stretches follow at residues 28 to 92 (WDST…REKL), 152 to 208 (QRGD…GRRP), 222 to 295 (SPSA…VPWT), and 351 to 376 (PNSE…SGLR). 2 stretches are compositionally biased toward low complexity: residues 32 to 48 (SPAS…CDGA) and 58 to 71 (SCSS…ATTP). The 55-residue stretch at 81 to 135 (GQRQSASEREKLRMRTLARALHELRRFLPPSLAPAGQSLTKIETLRLAIRYIGHL) folds into the bHLH domain. 13 tandem repeats follow at residues 179–180 (GQ), 181–182 (GQ), 183–184 (GQ), 185–186 (GQ), 187–188 (GQ), 189–190 (GQ), 191–192 (GQ), 193–194 (GQ), 195–196 (GQ), 197–198 (GQ), 199–200 (GQ), 201–202 (GQ), and 203–204 (GQ). The interval 179 to 204 (GQGQGQGQGQGQGQGQGQGQGQGQGQ) is 13 X 2 AA tandem repeats of G-Q. Gly residues predominate over residues 180 to 206 (QGQGQGQGQGQGQGQGQGQGQGQGQGR). The segment covering 235–244 (RLGRGVHDTD) has biased composition (basic and acidic residues). Composition is skewed to polar residues over residues 258-270 (PPYS…SDAS) and 365-375 (SEASPPQSSGL).

In terms of processing, degraded by the proteasome.

Its subcellular location is the nucleus. Transcription factor with important role in somitogenesis. Defines the rostrocaudal patterning of the somite by participating in distinct Notch pathways. Also regulates the FGF signaling pathway. Specifies the rostral half of the somites. Generates rostro-caudal polarity of somites by down-regulating in the presumptive rostral domain DLL1, a Notch ligand. Participates in the segment border formation by activating in the anterior presomitic mesoderm LFNG, a negative regulator of DLL1-Notch signaling. Acts as a strong suppressor of Notch activity. Together with MESP1 is involved in the epithelialization of somitic mesoderm and in the development of cardiac mesoderm. This chain is Mesoderm posterior protein 2 (MESP2), found in Homo sapiens (Human).